Consider the following 130-residue polypeptide: Protein LLP homolog (130 aa).

The segment covering 1-21 (MAKSLRSKWKRKMRAEKRKKN) has biased composition (basic residues). Disordered regions lie at residues 1–23 (MAKS…KNAP) and 57–76 (QEKM…EKDD). The stretch at 10-78 (KRKMRAEKRK…GADEEKDDMK (69 aa)) forms a coiled coil. K78 participates in a covalent cross-link: Glycyl lysine isopeptide (Lys-Gly) (interchain with G-Cter in SUMO2). A compositionally biased stretch (basic residues) spans 104–124 (RQRKRLKAKREKKRGKSRAKA). The interval 104–130 (RQRKRLKAKREKKRGKSRAKAAKGLAW) is disordered.

This sequence belongs to the learning-associated protein family. As to quaternary structure, interacts with CTCF, MYO1C and with the transcriptional machinery, including RNA polymerase II and TBP. Widely expressed, with high levels in testis and spleen and low levels in heart. In the brain, expressed in the cortex and hippocampus, and at very low levels in the cerebellum.

Its subcellular location is the nucleus. It localises to the nucleolus. The protein resides in the chromosome. Functionally, in hippocampal neurons, regulates dendritic and spine growth and synaptic transmission. The protein is Protein LLP homolog (Llph) of Mus musculus (Mouse).